Here is a 98-residue protein sequence, read N- to C-terminus: Integration host factor subunit beta (98 aa).

The protein belongs to the bacterial histone-like protein family. As to quaternary structure, heterodimer of an alpha and a beta chain.

Its function is as follows. This protein is one of the two subunits of integration host factor, a specific DNA-binding protein that functions in genetic recombination as well as in transcriptional and translational control. The chain is Integration host factor subunit beta from Pseudomonas entomophila (strain L48).